The following is a 94-amino-acid chain: Large ribosomal subunit protein bL27 (94 aa).

The propeptide occupies M1–F9. The segment at H11–A33 is disordered.

The protein belongs to the bacterial ribosomal protein bL27 family. In terms of processing, the N-terminus is cleaved by ribosomal processing cysteine protease Prp.

This Streptococcus agalactiae serotype V (strain ATCC BAA-611 / 2603 V/R) protein is Large ribosomal subunit protein bL27.